Here is a 75-residue protein sequence, read N- to C-terminus: Guanine nucleotide-binding protein G(I)/G(S)/G(O) subunit gamma-3 (75 aa).

Position 5 is a phosphothreonine (T5). Phosphoserine is present on S9. Residue T10 is modified to Phosphothreonine. At S12 the chain carries Phosphoserine. C72 is subject to Cysteine methyl ester. C72 carries S-geranylgeranyl cysteine lipidation. The propeptide at A73–L75 is removed in mature form.

The protein belongs to the G protein gamma family. In terms of assembly, g proteins are composed of 3 units, alpha, beta and gamma. Forms a complex with GNAO1 and GNB1. Interacts with SCN8A. As to expression, abundantly expressed in brain. Low levels in testis.

Its subcellular location is the cell membrane. Functionally, guanine nucleotide-binding proteins (G proteins) are involved as a modulator or transducer in various transmembrane signaling systems. The beta and gamma chains are required for the GTPase activity, for replacement of GDP by GTP, and for G protein-effector interaction. The polypeptide is Guanine nucleotide-binding protein G(I)/G(S)/G(O) subunit gamma-3 (GNG3) (Bos taurus (Bovine)).